Consider the following 121-residue polypeptide: Colipase-like protein 1 (121 aa).

Positions 1-23 (MMLPQWLLLLFLLFFFLFLLTRG) are cleaved as a signal peptide. Cystine bridges form between C39–C50, C45–C61, C49–C83, C71–C91, and C85–C107.

Belongs to the colipase family. Exclusively expressed in epididymis, in the corpus region.

The protein localises to the secreted. This chain is Colipase-like protein 1 (CLPSL1), found in Homo sapiens (Human).